The primary structure comprises 199 residues: MIGRISGLLLEKNPPQILVDAHGVGYELEVPMSTFYGLPATGTQVSLHTHLAIREDGHFLYGFATDEERTAFRQLLKVSGIGARTALAVLSGLSVSDLAQAVALQEAGRLVKIPGIGKKTAERLLLELRDKLGKALPQVAGARLAAVAGGAPDAKSDILNALLALGYNEKEALGAMKGLAEDTGVSDGIRQALKLLSKA.

The interval 1–64 is domain I; sequence MIGRISGLLL…EDGHFLYGFA (64 aa). Positions 65 to 143 are domain II; sequence TDEERTAFRQ…KALPQVAGAR (79 aa). Positions 144-154 are flexible linker; that stretch reads LAAVAGGAPDA. The tract at residues 154 to 199 is domain III; it reads AKSDILNALLALGYNEKEALGAMKGLAEDTGVSDGIRQALKLLSKA.

This sequence belongs to the RuvA family. In terms of assembly, homotetramer. Forms an RuvA(8)-RuvB(12)-Holliday junction (HJ) complex. HJ DNA is sandwiched between 2 RuvA tetramers; dsDNA enters through RuvA and exits via RuvB. An RuvB hexamer assembles on each DNA strand where it exits the tetramer. Each RuvB hexamer is contacted by two RuvA subunits (via domain III) on 2 adjacent RuvB subunits; this complex drives branch migration. In the full resolvosome a probable DNA-RuvA(4)-RuvB(12)-RuvC(2) complex forms which resolves the HJ.

It localises to the cytoplasm. In terms of biological role, the RuvA-RuvB-RuvC complex processes Holliday junction (HJ) DNA during genetic recombination and DNA repair, while the RuvA-RuvB complex plays an important role in the rescue of blocked DNA replication forks via replication fork reversal (RFR). RuvA specifically binds to HJ cruciform DNA, conferring on it an open structure. The RuvB hexamer acts as an ATP-dependent pump, pulling dsDNA into and through the RuvAB complex. HJ branch migration allows RuvC to scan DNA until it finds its consensus sequence, where it cleaves and resolves the cruciform DNA. This Azoarcus sp. (strain BH72) protein is Holliday junction branch migration complex subunit RuvA.